An 867-amino-acid chain; its full sequence is Probable beta-glucosidase A (867 aa).

The signal sequence occupies residues 1 to 18; sequence MRFSWLEVAVTAASLANA. 3 N-linked (GlcNAc...) asparagine glycosylation sites follow: Asn67, Asn218, and Asn259. Asp287 is an active-site residue. N-linked (GlcNAc...) asparagine glycosylation is found at Asn322, Asn329, Asn361, Asn449, Asn530, Asn549, Asn571, Asn675, and Asn719.

Belongs to the glycosyl hydrolase 3 family.

Its subcellular location is the secreted. The enzyme catalyses Hydrolysis of terminal, non-reducing beta-D-glucosyl residues with release of beta-D-glucose.. The protein operates within glycan metabolism; cellulose degradation. Functionally, beta-glucosidases are one of a number of cellulolytic enzymes involved in the degradation of cellulosic biomass. Catalyzes the last step releasing glucose from the inhibitory cellobiose. The protein is Probable beta-glucosidase A (bglA) of Aspergillus clavatus (strain ATCC 1007 / CBS 513.65 / DSM 816 / NCTC 3887 / NRRL 1 / QM 1276 / 107).